A 482-amino-acid polypeptide reads, in one-letter code: Lipoamide acyltransferase component of branched-chain alpha-keto acid dehydrogenase complex, mitochondrial (482 aa).

A mitochondrion-targeting transit peptide spans 1–61 (MAAALVLRTW…QWLKTTAALQ (61 aa)). The region spanning 64-139 (IVQFKLSDIG…YVGKPLVDIE (76 aa)) is the Lipoyl-binding domain. Lys105 is modified (N6-lipoyllysine). Lys133 is modified (N6-succinyllysine). The interval 145 to 160 (DSEEDVVETPAVSHDE) is critical for association with PPM1K. The interval 146 to 171 (SEEDVVETPAVSHDEHTHQEIKGQKT) is disordered. The span at 157–168 (SHDEHTHQEIKG) shows a compositional bias: basic and acidic residues. In terms of domain architecture, Peripheral subunit-binding (PSBD) spans 172-209 (LATPAVRRLAMENNIKLSEVIGSGKDGRILKEDILNYL). Lys196 is modified (N6-acetyllysine; alternate). Lys196 is modified (N6-succinyllysine; alternate). An N6-acetyllysine modification is found at Lys202. Residues 218 to 230 (PPSPKAEIMPPPP) are compositionally biased toward pro residues. A disordered region spans residues 218 to 238 (PPSPKAEIMPPPPKPKDRTIP). Ser220 is modified (phosphoserine). Residues Lys243 and Lys250 each carry the N6-acetyllysine modification. An N6-succinyllysine modification is found at Lys261. Lys289 carries the post-translational modification N6-acetyllysine; alternate. Position 289 is an N6-succinyllysine; alternate (Lys289). CoA is bound at residue Arg291. Lys295 and Lys304 each carry N6-acetyllysine. The CoA site is built by Ser306, Asp349, Gln378, Ser399, Asn400, Ser403, Gly424, and Ile426. Residue Lys435 is modified to N6-acetyllysine. At Lys440 the chain carries N6-acetyllysine; alternate. The residue at position 440 (Lys440) is an N6-succinyllysine; alternate. Active-site residues include His452 and Asp456.

This sequence belongs to the 2-oxoacid dehydrogenase family. Forms a 24-polypeptide structural core with octahedral symmetry that represents the E2 component of the branched-chain alpha-ketoacid dehydrogenase (BCKDH) complex. The BCKDH complex is composed of three major building blocks E1, E2 and E3. It is organized around E2, a 24-meric cubic core composed of DBT, to which are associated 6 to 12 copies of E1, and approximately 6 copies of the dehydrogenase E3, a DLD dimer. Interacts with PPM1K with a 24:1 stoichiometry; the N-terminal region (residues 49-61) of PPM1K and C-terminal linker of the lipoyl domain of DBT/E2 (residues 145-160) are critical for this interaction whereas the lipoyl prosthetic group is dispensable. This interaction requires colocalization in mitochondria. PPM1K competes with BCKDK for binding to DBT; this interaction is modulated by branched-chain alpha-keto acids (BCKAs). At steady state, BCKDH holoenzyme preferentially binds BCKDK and BCKDHA is phosphorylated. In response to high levels of BCKAs, BCKDK is replaced by PPM1K leading to BCKDHA dephosphorylation. The cofactor is (R)-lipoate. Expressed in kidney (at protein level).

The protein resides in the mitochondrion matrix. The enzyme catalyses N(6)-[(R)-dihydrolipoyl]-L-lysyl-[protein] + 2-methylpropanoyl-CoA = N(6)-[(R)-S(8)-2-methylpropanoyldihydrolipoyl]-L-lysyl-[protein] + CoA. Functionally, the branched-chain alpha-keto dehydrogenase complex catalyzes the overall conversion of alpha-keto acids to acyl-CoA and CO(2). It contains multiple copies of three enzymatic components: branched-chain alpha-keto acid decarboxylase (E1), lipoamide acyltransferase (E2) and lipoamide dehydrogenase (E3). Within this complex, the catalytic function of this enzyme is to accept, and to transfer to coenzyme A, acyl groups that are generated by the branched-chain alpha-keto acid decarboxylase component. This Bos taurus (Bovine) protein is Lipoamide acyltransferase component of branched-chain alpha-keto acid dehydrogenase complex, mitochondrial (DBT).